The sequence spans 235 residues: Derlin-3 (235 aa).

Over 1–22 the chain is Cytoplasmic; it reads MAWQGLAAEFLQVPAVTRAYTA. A helical membrane pass occupies residues 23–43; that stretch reads ACVLTTAAVQLELLSPFQLYF. The Lumenal portion of the chain corresponds to 44–58; the sequence is NPHLVFRKFQVWRLV. A helical membrane pass occupies residues 59 to 79; that stretch reads TNFLFFGPLGFSFFFNMLFVF. Over 80-98 the chain is Cytoplasmic; sequence RYCRMLEEGSFRGRTADFV. The chain crosses the membrane as a helical span at residues 99–119; the sequence is FMFLFGGVLMTLLGLLGSLFF. Over 120-157 the chain is Lumenal; the sequence is LGQALMAMLVYVWSRRSPRVRVNFFGLLTFQAPFLPWA. The chain crosses the membrane as a helical span at residues 158 to 178; it reads LMGFSLLLGNSILVDLLGIAV. Residues 179 to 235 lie on the Cytoplasmic side of the membrane; sequence GHIYYFLEDVFPNQPGGKRLLQTPGFLKLLLDAPAEDPNYLPLPEEQPGPHLPPPQQ. Positions 216 to 235 are disordered; the sequence is PNYLPLPEEQPGPHLPPPQQ. The span at 223–235 shows a compositional bias: pro residues; the sequence is EEQPGPHLPPPQQ.

This sequence belongs to the derlin family. In terms of assembly, forms homo- and heterooligomers with DERL2 and, to a lesser extent, with DERL1. Interacts with VCP and EDEM1. Interacts with SELENOK and SELENOS. Interacts with the signal recognition particle/SRP and the SRP receptor; in the process of endoplasmic reticulum stress-induced pre-emptive quality control. Unlike DERL1 and DERL2, restricted to several tissues. Expressed at high levels in placenta, pancreas, spleen and small intestine.

Its subcellular location is the endoplasmic reticulum membrane. In terms of biological role, functional component of endoplasmic reticulum-associated degradation (ERAD) for misfolded lumenal glycoproteins, but not that of misfolded nonglycoproteins. May act by forming a channel that allows the retrotranslocation of misfolded glycoproteins into the cytosol where they are ubiquitinated and degraded by the proteasome. May mediate the interaction between VCP and the misfolded glycoproteins. May be involved in endoplasmic reticulum stress-induced pre-emptive quality control, a mechanism that selectively attenuates the translocation of newly synthesized proteins into the endoplasmic reticulum and reroutes them to the cytosol for proteasomal degradation. This Homo sapiens (Human) protein is Derlin-3.